We begin with the raw amino-acid sequence, 310 residues long: Methionyl-tRNA formyltransferase (310 aa).

Position 111–114 (111–114 (SILP)) interacts with (6S)-5,6,7,8-tetrahydrofolate.

It belongs to the Fmt family.

The catalysed reaction is L-methionyl-tRNA(fMet) + (6R)-10-formyltetrahydrofolate = N-formyl-L-methionyl-tRNA(fMet) + (6S)-5,6,7,8-tetrahydrofolate + H(+). Functionally, attaches a formyl group to the free amino group of methionyl-tRNA(fMet). The formyl group appears to play a dual role in the initiator identity of N-formylmethionyl-tRNA by promoting its recognition by IF2 and preventing the misappropriation of this tRNA by the elongation apparatus. The polypeptide is Methionyl-tRNA formyltransferase (Methylobacterium nodulans (strain LMG 21967 / CNCM I-2342 / ORS 2060)).